A 252-amino-acid polypeptide reads, in one-letter code: 2-C-methyl-D-erythritol 4-phosphate cytidylyltransferase (252 aa).

The protein belongs to the IspD/TarI cytidylyltransferase family. IspD subfamily.

It catalyses the reaction 2-C-methyl-D-erythritol 4-phosphate + CTP + H(+) = 4-CDP-2-C-methyl-D-erythritol + diphosphate. It functions in the pathway isoprenoid biosynthesis; isopentenyl diphosphate biosynthesis via DXP pathway; isopentenyl diphosphate from 1-deoxy-D-xylulose 5-phosphate: step 2/6. In terms of biological role, catalyzes the formation of 4-diphosphocytidyl-2-C-methyl-D-erythritol from CTP and 2-C-methyl-D-erythritol 4-phosphate (MEP). The polypeptide is 2-C-methyl-D-erythritol 4-phosphate cytidylyltransferase (Chlorobium phaeobacteroides (strain BS1)).